Consider the following 639-residue polypeptide: Protein zwilch homolog (639 aa).

The span at Q76–K95 shows a compositional bias: basic and acidic residues. The tract at residues Q76–T116 is disordered. Over residues E96–A105 the composition is skewed to acidic residues.

It belongs to the ZWILCH family. Component of the RZZ complex composed of rod-1, czw-1 and zwl-1. Interacts with the spindly-like protein spdl-1. Interacts with NDC80 complex component ndc-80.

The protein localises to the cytoplasm. It localises to the cell cortex. It is found in the chromosome. Its subcellular location is the centromere. The protein resides in the kinetochore. The protein localises to the cytoskeleton. It localises to the spindle. In terms of biological role, essential component of the mitotic checkpoint, which prevents cells from prematurely exiting mitosis. Required for chromosome segregation, the assembly of the dynein-dynactin and mdf-1-mdf-2 complexes onto kinetochores and spindle pole separation. Its function related to the spindle assembly machinery and kinetochore-microtubule attachments likely depends on its association in the mitotic RZZ complex. The RZZ complex recruits the spindly-like protein spdl-1 to kinetochores. To prevent irregular chromosome segregation, the complex also inhibits the attachment of the kinetochore-associated NDC80 complex to microtubules. The recruitment of spdl-1 to kinetochores relieves this inhibition. Required for embryonic development. The sequence is that of Protein zwilch homolog (zwl-1) from Caenorhabditis briggsae.